Consider the following 283-residue polypeptide: Vitamin K epoxide reductase homolog (283 aa).

Over 1–20 (MASYLKLKAQEETWLQRHSR) the chain is Cytoplasmic. Residues 21 to 41 (LILAILAGLGSLLTAYLTYTK) traverse the membrane as a helical segment. Over 42–66 (LTEQPAAFCTGDGGCDLVLSSRWAE) the chain is Periplasmic. A disulfide bridge links Cys-50 with Cys-56. 59–65 (VLSSRWA) contacts a quinone. The helical transmembrane segment at 67 to 87 (FLGIPTAAVGLLGFLGVLALA) threads the bilayer. The Cytoplasmic portion of the chain corresponds to 88 to 102 (VLPDGLPLVKRWRWP). A helical membrane pass occupies residues 103 to 123 (ALFGLVSAMTAFEMYMLYLMV). A quinone is bound at residue 111–122 (MTAFEMYMLYLM). At 124 to 128 (AVLRQ) the chain is on the periplasmic side. A helical transmembrane segment spans residues 129–149 (FCMYCTTAIILVAGLGLVTVL). Residues Cys-130 and Cys-133 are joined by a disulfide bond. Topologically, residues 150–158 (GHRWLDGGK) are cytoplasmic. Residues 159–179 (LAFSYILVAFLTLVTTIGVYA) form a helical membrane-spanning segment. At 180-283 (NQVPPPSPLA…ASGYPLEEGR (104 aa)) the chain is on the periplasmic side. The thioredoxin-like domain stretch occupies residues 186 to 283 (SPLAVGLAAH…ASGYPLEEGR (98 aa)). 2 disulfides stabilise this stretch: Cys-209–Cys-212 and Cys-231–Cys-244.

It belongs to the VKOR family.

Its subcellular location is the membrane. Its activity is regulated as follows. Inhibited by ferulenol. Functionally, thiol-disulfide oxidoreductase that catalyzes vitamin K-dependent disulfide bond formation in periplasmic target proteins. This chain is Vitamin K epoxide reductase homolog, found in Synechococcus sp. (strain JA-2-3B'a(2-13)) (Cyanobacteria bacterium Yellowstone B-Prime).